A 381-amino-acid polypeptide reads, in one-letter code: MVVMSRVSFYSSFLLLLLEVVVASSEFDDEGRTSFSPTTAIIMIVLVSVFFALGCISVYMRRCLQHALGMDSGGGPGNWLNVRQTTEPGLDASVIETFPTFPYSTVKTLRIGKEALECPVCLNEFEDDETLRLIPQCCHVFHPGCIDAWLRSQTTCPLCRANLVPVPGESVSSEIPGLARETGQNSLRTPIDDNRKRVLTSPDERLIDSVAWTGNQSMPRKSMSTGWKLAELYSPASSPGQPEENLDRYTLRLPQEIHDQLVNSSLGKQGSKGQLALPQERSSVRGFRTGSLGTEKNYFYFERFDQDGRLDRRPFSITPPYHTRSIQSPDEIINASGNYQDRAGAPKGLLLAIRSPFDRLFTGKKNAGERSYLQSGDASPV.

Positions 1–23 are cleaved as a signal peptide; that stretch reads MVVMSRVSFYSSFLLLLLEVVVA. A helical membrane pass occupies residues 40–60; that stretch reads AIIMIVLVSVFFALGCISVYM. The RING-type; atypical zinc-finger motif lies at 118 to 160; that stretch reads CPVCLNEFEDDETLRLIPQCCHVFHPGCIDAWLRSQTTCPLCR.

Belongs to the RING-type zinc finger family. ATL subfamily.

Its subcellular location is the membrane. It carries out the reaction S-ubiquitinyl-[E2 ubiquitin-conjugating enzyme]-L-cysteine + [acceptor protein]-L-lysine = [E2 ubiquitin-conjugating enzyme]-L-cysteine + N(6)-ubiquitinyl-[acceptor protein]-L-lysine.. It functions in the pathway protein modification; protein ubiquitination. Functionally, E3 ubiquitin-protein ligase able to catalyze polyubiquitination with ubiquitin-conjugating enzyme E2 UBC8, UBC10, UBC11, UBC28 and UBC29 in vitro. In Arabidopsis thaliana (Mouse-ear cress), this protein is E3 ubiquitin-protein ligase ATL15 (ATL15).